Reading from the N-terminus, the 748-residue chain is Pleckstrin homology domain-containing family M member 3 (748 aa).

Disordered regions lie at residues 88-107 (HAKE…PLLS) and 129-187 (NDSL…RNKN). Composition is skewed to basic and acidic residues over residues 129 to 140 (NDSLDHLEDAPK) and 148 to 159 (SRSDVSHIDWKN). A compositionally biased stretch (polar residues) spans 167–180 (QRSSSQGMHCTSPF). PH domains follow at residues 200–297 (NILK…EAIC) and 348–443 (NIIK…SAAN). The Phorbol-ester/DAG-type zinc finger occupies 656–709 (SHVYSCSLCSQKGFICEICNNGEILYPFEENSTSRCENCGAVFHSDCKVRTVPC).

It localises to the cytoplasm. It is found in the golgi apparatus. Its subcellular location is the cell membrane. May play a role during muscle differentiation. The polypeptide is Pleckstrin homology domain-containing family M member 3 (plekhm3) (Xenopus laevis (African clawed frog)).